A 294-amino-acid polypeptide reads, in one-letter code: RAB7A-interacting MON1-CCZ1 complex subunit 1 (294 aa).

Alanine 2 is subject to N-acetylalanine.

This sequence belongs to the RIMOC1 family. As to quaternary structure, interacts with the MON1A-CCZ1B complex. Interacts with GDP-bound RAB7A and promotes its interaction with the MON1A-CCZ1B complex.

It is found in the cytoplasm. Its subcellular location is the cytosol. In terms of biological role, plays an important role in the removal of damaged mitochondria via mitophagy by controlling the stability and localization of RAB7A. Required for the recruitment of RAB7A and ATG9A vesicles to damaged mitochondria and promotes the stability of RAB7A by inhibiting its proteasomal degradation during mitophagy. The sequence is that of RAB7A-interacting MON1-CCZ1 complex subunit 1 from Mus musculus (Mouse).